The primary structure comprises 942 residues: Calcium-activated chloride channel regulator 2 (942 aa).

The N-terminal stretch at 1 to 32 is a signal peptide; that stretch reads MTHRDSTGPVIGLKLVTLLFTLSPELLFLGAG. Over 33 to 905 the chain is Extracellular; the sequence is LKLKENGYDG…SRDDLILKGV (873 aa). A metalloprotease domain region spans residues 54–205; that stretch reads DLKLITNIKE…CSSDITGVFV (152 aa). N-linked (GlcNAc...) asparagine glycans are attached at residues Asn74 and Asn97. His164 is a binding site for Zn(2+). The active site involves Glu165. Positions 168 and 175 each coordinate Zn(2+). N-linked (GlcNAc...) asparagine glycans are attached at residues Asn231, Asn235, Asn254, and Asn286. In terms of domain architecture, VWFA spans 311–483; the sequence is VVCLVIDVSR…NGMTEAFVRI (173 aa). N-linked (GlcNAc...) asparagine glycosylation is found at Asn522, Asn580, Asn637, and Asn821. The chain crosses the membrane as a helical span at residues 906-926; sequence LTTVGLIAILCLIMVVAHCIF. Residues 927–942 are Cytoplasmic-facing; it reads NRKKRPSRKENETKFL.

Belongs to the CLCR family. The translation product is autoproteolytically cleaved by the metalloprotease domain in the endoplasmic reticulum into a N-terminal and a C-terminal products that remain physically associated with each other. The cleavage is necessary for calcium-activated chloride channel (CaCC) activation activity. Post-translationally, N-glycosylated. Highly expressed in eye, spleen, lung, kidney, uterus, and endothelial cells. Weakly expressed in heart and throughout the gastrointestinal tract. Highly expressed in mammary cell lines. Its expression in immortalized cell line HC11 correlates with slow or arrested growth. Re-expression in mammary tumor cells reduces colony survival.

The protein localises to the cell membrane. Its subcellular location is the basal cell membrane. The protein resides in the cell junction. In terms of biological role, plays a role in modulating chloride current across the plasma membrane in a calcium-dependent manner, and cell adhesion. Involved in basal cell adhesion and/or stratification of squamous epithelia. May act as a tumor suppressor in breast and colorectal cancer. Plays a key role for cell adhesion in the beginning stages of lung metastasis via the binding to ITGB4. This is Calcium-activated chloride channel regulator 2 (Clca2) from Mus musculus (Mouse).